The primary structure comprises 142 residues: Large ribosomal subunit protein uL11 (142 aa).

The protein belongs to the universal ribosomal protein uL11 family. As to quaternary structure, part of the ribosomal stalk of the 50S ribosomal subunit. Interacts with L10 and the large rRNA to form the base of the stalk. L10 forms an elongated spine to which L12 dimers bind in a sequential fashion forming a multimeric L10(L12)X complex. In terms of processing, one or more lysine residues are methylated.

In terms of biological role, forms part of the ribosomal stalk which helps the ribosome interact with GTP-bound translation factors. This chain is Large ribosomal subunit protein uL11, found in Idiomarina loihiensis (strain ATCC BAA-735 / DSM 15497 / L2-TR).